The following is a 492-amino-acid chain: Heat shock factor protein 4 (492 aa).

Residues 17 to 121 (VPAFLGKLWA…QLLERVRRKV (105 aa)) mediate DNA binding. The tract at residues 129-203 (GRWRPEDLGR…GPLQTGSSGA (75 aa)) is hydrophobic repeat HR-A/B. An interactions with DUSP26, MAPK1 and MAPK2 region spans residues 245–323 (LPETTLGLSS…ECDFCVTAPP (79 aa)). Positions 250 to 286 (LGLSSSHRTRGPIISDIHEDSPSPDGTRLSPSSGGRR) are disordered. A Glycyl lysine isopeptide (Lys-Gly) (interchain with G-Cter in SUMO) cross-link involves residue lysine 294. Serine 299 carries the phosphoserine modification. The tract at residues 337–378 (KGNFSPEGPRNAQQPEPRGPREVPDRGTLGLDRGARSPENLL) is disordered. The interval 365–390 (LGLDRGARSPENLLPPMLLRAPPESV) is hydrophobic repeat HR-C.

The protein belongs to the HSF family. Homotrimer. Exhibits constitutive DNA binding and forms trimers even in the absence of stress. Interacts with ALKBH4, DUSP26, MAPK1, MAPK2, MAPK8 and MAP kinase p38. Phosphorylated mainly on serine residues. Phosphorylation on Ser-299 promotes sumoylation on Lys-294. Post-translationally, constitutively sumoylated. Sumoylation represses the transcriptional activity and is promoted by phosphorylation on Ser-299.

The protein resides in the nucleus. Heat-shock transcription factor that specifically binds heat shock promoter elements (HSE). Required for denucleation and organelle rupture and degradation that occur during eye lens terminal differentiation, when fiber cells that compose the lens degrade all membrane-bound organelles in order to provide lens with transparency to allow the passage of light. In this process, may regulate denucleation of lens fiber cells in part by activating DNASE2B transcription. May be involved in DNA repair through the transcriptional regulation of RAD51. May up-regulate p53/TP53 protein in eye lens fiber cells, possibly through protein stabilization. In the eye lens, controls the expression of alpha-crystallin B chain/CRYAB and consequently may be involved in the regulation of lysosomal acidification. This is Heat shock factor protein 4 (HSF4) from Canis lupus familiaris (Dog).